We begin with the raw amino-acid sequence, 282 residues long: MEMO1 family protein Msm_1438 (282 aa).

It belongs to the MEMO1 family.

In Methanobrevibacter smithii (strain ATCC 35061 / DSM 861 / OCM 144 / PS), this protein is MEMO1 family protein Msm_1438.